Here is a 519-residue protein sequence, read N- to C-terminus: Probable cytochrome P450 513D1 (519 aa).

The helical transmembrane segment at 1-21 (MGISSIIIILFIIVLLKKLIK) threads the bilayer. Residue C464 coordinates heme.

The protein belongs to the cytochrome P450 family. Heme serves as cofactor.

The protein resides in the membrane. The polypeptide is Probable cytochrome P450 513D1 (cyp513D1) (Dictyostelium discoideum (Social amoeba)).